A 348-amino-acid polypeptide reads, in one-letter code: UDP-N-acetyl-alpha-D-glucosaminouronate 4-epimerase (348 aa).

Positions 26, 27, 46, 50, 51, 77, 78, 97, 165, 169, and 195 each coordinate NAD(+). Tyr165 functions as the Proton acceptor in the catalytic mechanism.

This sequence belongs to the NAD(P)-dependent epimerase/dehydratase family. In terms of assembly, homodimer. NAD(+) is required as a cofactor.

It catalyses the reaction UDP-2-acetamido-2-deoxy-alpha-D-glucuronate = UDP-2-acetamido-2-deoxy-alpha-D-galacturonate. It carries out the reaction UDP-N-acetyl-alpha-D-glucosamine = UDP-N-acetyl-alpha-D-galactosamine. It functions in the pathway capsule biogenesis; capsule polysaccharide biosynthesis. Its pathway is glycan metabolism; Vi-antigen biosynthesis. In terms of biological role, epimerase required for the biosynthesis of the capsular polysaccharide, commonly referred as the Vi antigen, an important virulence factor. Catalyzes the reversible epimerization of UDP-N-acetylglucosaminuronic acid (UDP-GlcNAcA) to UDP-N-acetylgalactosaminuronic acid (UDP-GalNAcA). Also catalyzes, with lower efficiency, the reversible epimerization of UDP-N-acetylglucosamine (UDP-GlcNAc) to UDP-N-acetylgalactosamine (UDP-GalNAc). Cannot use UDP-glucose (UDP-Glc) and UDP-galactose (UDP-Gal) as substrates. The polypeptide is UDP-N-acetyl-alpha-D-glucosaminouronate 4-epimerase (Salmonella typhi).